A 38-amino-acid polypeptide reads, in one-letter code: Large ribosomal subunit protein bL36 (38 aa).

This sequence belongs to the bacterial ribosomal protein bL36 family.

This Bacteroides fragilis (strain ATCC 25285 / DSM 2151 / CCUG 4856 / JCM 11019 / LMG 10263 / NCTC 9343 / Onslow / VPI 2553 / EN-2) protein is Large ribosomal subunit protein bL36.